Here is a 326-residue protein sequence, read N- to C-terminus: DNA-directed RNA polymerase subunit alpha (326 aa).

Residues 1–231 form an alpha N-terminal domain (alpha-NTD) region; that stretch reads MQTALLKPKI…DQLSVFAALE (231 aa). The tract at residues 247–326 is alpha C-terminal domain (alpha-CTD); the sequence is IDPILLRPVD…ENWPPAGLEK (80 aa).

The protein belongs to the RNA polymerase alpha chain family. As to quaternary structure, homodimer. The RNAP catalytic core consists of 2 alpha, 1 beta, 1 beta' and 1 omega subunit. When a sigma factor is associated with the core the holoenzyme is formed, which can initiate transcription.

It catalyses the reaction RNA(n) + a ribonucleoside 5'-triphosphate = RNA(n+1) + diphosphate. In terms of biological role, DNA-dependent RNA polymerase catalyzes the transcription of DNA into RNA using the four ribonucleoside triphosphates as substrates. In Ralstonia nicotianae (strain ATCC BAA-1114 / GMI1000) (Ralstonia solanacearum), this protein is DNA-directed RNA polymerase subunit alpha.